A 361-amino-acid chain; its full sequence is F-box protein pof7 (361 aa).

Residues 105–157 enclose the F-box domain; sequence NESVVPNILKLPDEVLLVILENCIRDLHDLRYLSSIALTCKHFAKALRADSLY.

In terms of assembly, interacts with skp1.

Its subcellular location is the cytoplasm. This chain is F-box protein pof7 (pof7), found in Schizosaccharomyces pombe (strain 972 / ATCC 24843) (Fission yeast).